A 66-amino-acid chain; its full sequence is Large ribosomal subunit protein bL35 (66 aa).

Residues 1-26 (MPKMKTHRGSAKRFKKTGSGKLKRSH) show a composition bias toward basic residues. The interval 1–48 (MPKMKTHRGSAKRFKKTGSGKLKRSHAYTSHLFANKSQKQKRKLRKSA) is disordered.

Belongs to the bacterial ribosomal protein bL35 family. In terms of assembly, part of the 50S ribosomal subunit.

In Bacillus subtilis (strain 168), this protein is Large ribosomal subunit protein bL35.